We begin with the raw amino-acid sequence, 501 residues long: Pyruvate dehydrogenase protein X component, mitochondrial (501 aa).

The N-terminal 53 residues, methionine 1 to glutamine 53, are a transit peptide targeting the mitochondrion. The 77-residue stretch at proline 56–valine 132 folds into the Lipoyl-binding domain. Position 97 is an N6-lipoyllysine (lysine 97). The tract at residues lysine 145–histidine 176 is disordered. Positions alanine 149–proline 169 are enriched in pro residues. Residues arginine 183–valine 220 form the Peripheral subunit-binding (PSBD) domain. Lysine 194 carries the N6-acetyllysine modification. Serine 196 carries the phosphoserine modification. Residues isoleucine 228–proline 256 are disordered. Lysine 394 is subject to N6-succinyllysine.

The protein belongs to the 2-oxoacid dehydrogenase family. In terms of assembly, part of the inner core of the multimeric pyruvate dehydrogenase complex that is composed of about 48 DLAT and 12 PDHX molecules. This core binds multiple copies of pyruvate dehydrogenase (subunits PDH1A and PDHB, E1), dihydrolipoamide acetyltransferase (DLAT, E2) and lipoamide dehydrogenase (DLD, E3). Interacts with SIRT4. Interacts with DLD. Delipoylated at Lys-97 by SIRT4, delipoylation decreases the PHD complex activity.

It localises to the mitochondrion matrix. Functionally, required for anchoring dihydrolipoamide dehydrogenase (E3) to the dihydrolipoamide transacetylase (E2) core of the pyruvate dehydrogenase complexes of eukaryotes. This specific binding is essential for a functional PDH complex. The sequence is that of Pyruvate dehydrogenase protein X component, mitochondrial (Pdhx) from Mus musculus (Mouse).